The following is a 995-amino-acid chain: ATP-dependent RNA helicase DBP10 (995 aa).

Residues 1-120 form a disordered region; sequence MAGVQKRKRD…TQTGDDEDDV (120 aa). Composition is skewed to acidic residues over residues 12–25 and 37–50; these read EDQDDNGSEEDDIA and SESDANDSDSEVEA. Positions 71-81 are enriched in basic and acidic residues; it reads VNNKKKAENKD. Residue S101 is modified to Phosphoserine. Residues 137-165 carry the Q motif motif; sequence GSFPSFGLSKIVLNNIKRKGFRQPTPIQR. The Helicase ATP-binding domain maps to 168 to 340; that stretch reads IPLILQSRDI…KAGLVNPVLV (173 aa). Residue 181–188 coordinates ATP; sequence ARTGSGKT. The DEAD box signature appears at 288–291; that stretch reads DEAD. Disordered stretches follow at residues 389-427 and 889-973; these read LQNSNNEADSDSDDENDRQKKRRNFKKEKFRKQKMPAAN and GSRE…EQIR. Residues S398 and S400 each carry the phosphoserine modification. Basic residues-rich tracts occupy residues 407–422 and 914–924; these read QKKRRNFKKEKFRKQK and VRGKFKHKQMK. The region spanning 418 to 568 is the Helicase C-terminal domain; that stretch reads FRKQKMPAAN…PMYDSLVDVM (151 aa). Residues 964–973 show a composition bias toward basic and acidic residues; the sequence is SELKSTEQIR.

It belongs to the DEAD box helicase family. DDX54/DBP10 subfamily. As to quaternary structure, interacts with RRP1 and associates with pre-ribosomal particles.

The protein resides in the nucleus. It is found in the nucleolus. The enzyme catalyses ATP + H2O = ADP + phosphate + H(+). ATP-binding RNA helicase involved in the biogenesis of 60S ribosomal subunits and is required for the normal formation of 25S and 5.8S rRNAs. This chain is ATP-dependent RNA helicase DBP10 (DBP10), found in Saccharomyces cerevisiae (strain ATCC 204508 / S288c) (Baker's yeast).